The chain runs to 232 residues: Protein Mis18-alpha (232 aa).

A phosphoserine mark is found at Ser36, Ser39, and Ser40. The 99-residue stretch at 79–177 (PLVFLCSGCR…SVEAIESYVL (99 aa)) folds into the Mis18 domain. 4 residues coordinate Zn(2+): Cys84, Cys87, Cys140, and Cys143. A Glycyl lysine isopeptide (Lys-Gly) (interchain with G-Cter in SUMO2) cross-link involves residue Lys161. Position 232 is a phosphoserine (Ser232).

The protein belongs to the mis18 family. In terms of assembly, homodimer, and heterodimer with OIP5/MIS18B. Identified in a complex containing MIS18A, OIP5/MIS18B, MIS18BP1, RBBP7 and RBBP4.

It localises to the nucleus. The protein resides in the chromosome. The protein localises to the centromere. Required for recruitment of CENPA to centromeres and normal chromosome segregation during mitosis. The chain is Protein Mis18-alpha (MIS18A) from Pan troglodytes (Chimpanzee).